Here is a 624-residue protein sequence, read N- to C-terminus: Actin-related protein 8 (624 aa).

Position 1 is an N-acetylmethionine (Met1). Basic and acidic residues predominate over residues 1-25; that stretch reads MTQAEKGDAENGKEKGGEKEKEQRG. The segment at 1-29 is disordered; that stretch reads MTQAEKGDAENGKEKGGEKEKEQRGVKRP. Residues Ser55 and Thr56 each contribute to the ATP site. Phosphoserine is present on Ser132. 283–286 contributes to the ATP binding site; that stretch reads DVGD. Residue Ser412 is modified to Phosphoserine. The tract at residues 430–462 is disordered; the sequence is SKQEQSAKATADRKSASKPIGFEGDLRGQSSDL.

Belongs to the actin family. ARP8 subfamily. Component of the chromatin remodeling INO80 complex; specifically part of a complex module associated with the DBINO domain of INO80. Exists as monomers and dimers, but the dimer is most probably the biologically relevant form required for stable interactions with histones that exploits the twofold symmetry of the nucleosome core.

The protein resides in the nucleus. It is found in the chromosome. Plays an important role in the functional organization of mitotic chromosomes. Exhibits low basal ATPase activity, and unable to polymerize. In terms of biological role, proposed core component of the chromatin remodeling INO80 complex which is involved in transcriptional regulation, DNA replication and probably DNA repair. Required for the recruitment of INO80 (and probably the INO80 complex) to sites of DNA damage Strongly prefer nucleosomes and H3-H4 tetramers over H2A-H2B dimers, suggesting it may act as a nucleosome recognition module within the complex. The polypeptide is Actin-related protein 8 (Actr8) (Mus musculus (Mouse)).